A 180-amino-acid chain; its full sequence is NAD(P)H-quinone oxidoreductase subunit I, chloroplastic (180 aa).

2 4Fe-4S ferredoxin-type domains span residues Gly55–Lys84 and Leu95–Glu124. [4Fe-4S] cluster contacts are provided by Cys64, Cys67, Cys70, Cys74, Cys104, Cys107, Cys110, and Cys114.

It belongs to the complex I 23 kDa subunit family. NDH is composed of at least 16 different subunits, 5 of which are encoded in the nucleus. [4Fe-4S] cluster is required as a cofactor.

Its subcellular location is the plastid. The protein localises to the chloroplast thylakoid membrane. The enzyme catalyses a plastoquinone + NADH + (n+1) H(+)(in) = a plastoquinol + NAD(+) + n H(+)(out). It catalyses the reaction a plastoquinone + NADPH + (n+1) H(+)(in) = a plastoquinol + NADP(+) + n H(+)(out). Its function is as follows. NDH shuttles electrons from NAD(P)H:plastoquinone, via FMN and iron-sulfur (Fe-S) centers, to quinones in the photosynthetic chain and possibly in a chloroplast respiratory chain. The immediate electron acceptor for the enzyme in this species is believed to be plastoquinone. Couples the redox reaction to proton translocation, and thus conserves the redox energy in a proton gradient. This chain is NAD(P)H-quinone oxidoreductase subunit I, chloroplastic, found in Ranunculus macranthus (Large buttercup).